The chain runs to 234 residues: Glucosamine-6-phosphate deaminase (234 aa).

D62 (proton acceptor; for enolization step) is an active-site residue. The active-site For ring-opening step is the N128. H130 acts as the Proton acceptor; for ring-opening step in catalysis. The active-site For ring-opening step is the E135.

The protein belongs to the glucosamine/galactosamine-6-phosphate isomerase family. NagB subfamily.

The catalysed reaction is alpha-D-glucosamine 6-phosphate + H2O = beta-D-fructose 6-phosphate + NH4(+). The protein operates within amino-sugar metabolism; N-acetylneuraminate degradation; D-fructose 6-phosphate from N-acetylneuraminate: step 5/5. Its function is as follows. Catalyzes the reversible isomerization-deamination of glucosamine 6-phosphate (GlcN6P) to form fructose 6-phosphate (Fru6P) and ammonium ion. The protein is Glucosamine-6-phosphate deaminase of Streptococcus pyogenes serotype M18 (strain MGAS8232).